The sequence spans 301 residues: Acetylglutamate kinase (301 aa).

Substrate contacts are provided by residues 72–73 (GG), Arg-94, and Asn-199.

The protein belongs to the acetylglutamate kinase family. ArgB subfamily.

It localises to the cytoplasm. It catalyses the reaction N-acetyl-L-glutamate + ATP = N-acetyl-L-glutamyl 5-phosphate + ADP. The protein operates within amino-acid biosynthesis; L-arginine biosynthesis; N(2)-acetyl-L-ornithine from L-glutamate: step 2/4. Its function is as follows. Catalyzes the ATP-dependent phosphorylation of N-acetyl-L-glutamate. This is Acetylglutamate kinase from Bartonella tribocorum (strain CIP 105476 / IBS 506).